The sequence spans 527 residues: (3S)-3-amino-3-(3-chloro-4-hydroxyphenyl)propanoyl-[peptidyl-carrier protein SgcC2] monooxygenase (527 aa).

The span at 1 to 10 (MPHGAEREAS) shows a compositional bias: basic and acidic residues. The disordered stretch occupies residues 1–22 (MPHGAEREASPAEESAGTRPLT). FAD is bound by residues 161-163 (HAF), 167-170 (PVDR), and Thr-202.

The protein belongs to the FADH(2)-utilizing monooxygenase family. In terms of assembly, homotetramer.

It catalyses the reaction (3S)-3-amino-3-(3-chloro-4-hydroxyphenyl)propanoyl-[SgcC2 peptidyl-carrier protein] + FADH2 + O2 = (3S)-3-amino-3-(3-chloro-4,5-dihydroxyphenyl)propanoyl-[SgcC2 peptidyl-carrier protein] + FAD + H2O + H(+). The protein operates within antibiotic biosynthesis. With respect to regulation, the SgcE6-SgcC hydroxylation activity decreases in the presence of excess FAD. Functionally, oxygenase component of a two-component system involved in the biosynthesis of the enediyne antitumor antibiotic C-1027. Uses FADH(2) supplied by SgcE6 to catalyze the C-5 hydroxylation of (S)-3-chloro-beta-tyrosyl-S-SgcC2. Can also efficiently catalyze the regioselective hydroxylation of other 3-substituted beta-tyrosyl-S-SgcC2 analogs, including the bromo-, iodo-, fluoro-, and methyl-substituted analogs, but does not accept 3-hydroxy-beta-tyrosyl-S-SgcC2 as a substrate. Is only active with SgcC2 (peptidyl carrier protein)-tethered substrates. In Streptomyces globisporus, this protein is (3S)-3-amino-3-(3-chloro-4-hydroxyphenyl)propanoyl-[peptidyl-carrier protein SgcC2] monooxygenase.